Consider the following 110-residue polypeptide: Pathogenesis-related protein (110 aa).

An N-terminal signal peptide occupies residues 1 to 19 (AFLLAATLTISSHMQEAGA).

It belongs to the thaumatin family.

This Juniperus virginiana (Eastern redcedar) protein is Pathogenesis-related protein.